The following is a 183-amino-acid chain: Small ribosomal subunit protein uS4c (183 aa).

Residues 82–143 enclose the S4 RNA-binding domain; sequence MRLDNILFRL…KQRSKALIQN (62 aa).

Belongs to the universal ribosomal protein uS4 family. Part of the 30S ribosomal subunit. Contacts protein S5. The interaction surface between S4 and S5 is involved in control of translational fidelity.

The protein resides in the plastid. The protein localises to the chloroplast. One of the primary rRNA binding proteins, it binds directly to 16S rRNA where it nucleates assembly of the body of the 30S subunit. Its function is as follows. With S5 and S12 plays an important role in translational accuracy. The chain is Small ribosomal subunit protein uS4c (rps4) from Schizorhiza neglecta (Lapeirousia neglecta).